The primary structure comprises 661 residues: Heme transporter BhuA (661 aa).

Positions 1–23 (MKFTRTLVLASTSLLATVATSQA) are cleaved as a signal peptide. One can recognise a TBDR plug domain in the interval 48-159 (KDNIEATGGT…AAGAIRYETV (112 aa)). A TBDR beta-barrel domain is found at 170–661 (TFGARIIGSY…TFTFQTAFKF (492 aa)).

It belongs to the TonB-dependent receptor family.

It localises to the cell outer membrane. Heme transporter. The sequence is that of Heme transporter BhuA (bhuA) from Brucella abortus biovar 1 (strain 9-941).